The following is a 161-amino-acid chain: Glycine cleavage system H protein 3 (161 aa).

Residues 40 to 122 (TVTLGLTDVG…YGDAWIVKIK (83 aa)) enclose the Lipoyl-binding domain. At Lys-81 the chain carries N6-lipoyllysine.

It belongs to the GcvH family. As to quaternary structure, the glycine cleavage system is composed of four proteins: P, T, L and H. It depends on (R)-lipoate as a cofactor.

In terms of biological role, the glycine cleavage system catalyzes the degradation of glycine. The H protein shuttles the methylamine group of glycine from the P protein to the T protein. This chain is Glycine cleavage system H protein 3, found in Aquifex aeolicus (strain VF5).